The sequence spans 240 residues: 1-(5-phosphoribosyl)-5-[(5-phosphoribosylamino)methylideneamino] imidazole-4-carboxamide isomerase (240 aa).

Asp-9 functions as the Proton acceptor in the catalytic mechanism. Asp-131 (proton donor) is an active-site residue.

It belongs to the HisA/HisF family.

Its subcellular location is the cytoplasm. It catalyses the reaction 1-(5-phospho-beta-D-ribosyl)-5-[(5-phospho-beta-D-ribosylamino)methylideneamino]imidazole-4-carboxamide = 5-[(5-phospho-1-deoxy-D-ribulos-1-ylimino)methylamino]-1-(5-phospho-beta-D-ribosyl)imidazole-4-carboxamide. Its pathway is amino-acid biosynthesis; L-histidine biosynthesis; L-histidine from 5-phospho-alpha-D-ribose 1-diphosphate: step 4/9. This is 1-(5-phosphoribosyl)-5-[(5-phosphoribosylamino)methylideneamino] imidazole-4-carboxamide isomerase from Cytophaga hutchinsonii (strain ATCC 33406 / DSM 1761 / CIP 103989 / NBRC 15051 / NCIMB 9469 / D465).